The chain runs to 310 residues: Probable cell division protein WhiA (310 aa).

Positions 277 to 310 form a DNA-binding region, H-T-H motif; that stretch reads SLKELAEQVPDGPISKSGVNHRLKKLHEIAENLR.

The protein belongs to the WhiA family.

In terms of biological role, involved in cell division and chromosome segregation. The protein is Probable cell division protein WhiA of Lactobacillus delbrueckii subsp. bulgaricus (strain ATCC 11842 / DSM 20081 / BCRC 10696 / JCM 1002 / NBRC 13953 / NCIMB 11778 / NCTC 12712 / WDCM 00102 / Lb 14).